Reading from the N-terminus, the 456-residue chain is Dual-specificity RNA methyltransferase RlmN (456 aa).

Residues 1 to 21 (MIQRHLGQPRLIQNGGDAGGV) form a disordered region. Glu-175 acts as the Proton acceptor in catalysis. In terms of domain architecture, Radical SAM core spans 183-416 (DEERGAVCIS…QDAGYSAPIR (234 aa)). Residues Cys-190 and Cys-427 are joined by a disulfide bond. Residues Cys-197, Cys-201, and Cys-204 each coordinate [4Fe-4S] cluster. Residues 253-254 (GE), Ser-285, 307-309 (SLH), and Asn-384 each bind S-adenosyl-L-methionine. Catalysis depends on Cys-427, which acts as the S-methylcysteine intermediate.

It belongs to the radical SAM superfamily. RlmN family. The cofactor is [4Fe-4S] cluster.

The protein resides in the cytoplasm. The enzyme catalyses adenosine(2503) in 23S rRNA + 2 reduced [2Fe-2S]-[ferredoxin] + 2 S-adenosyl-L-methionine = 2-methyladenosine(2503) in 23S rRNA + 5'-deoxyadenosine + L-methionine + 2 oxidized [2Fe-2S]-[ferredoxin] + S-adenosyl-L-homocysteine. It catalyses the reaction adenosine(37) in tRNA + 2 reduced [2Fe-2S]-[ferredoxin] + 2 S-adenosyl-L-methionine = 2-methyladenosine(37) in tRNA + 5'-deoxyadenosine + L-methionine + 2 oxidized [2Fe-2S]-[ferredoxin] + S-adenosyl-L-homocysteine. Specifically methylates position 2 of adenine 2503 in 23S rRNA and position 2 of adenine 37 in tRNAs. m2A2503 modification seems to play a crucial role in the proofreading step occurring at the peptidyl transferase center and thus would serve to optimize ribosomal fidelity. This Paramagnetospirillum magneticum (strain ATCC 700264 / AMB-1) (Magnetospirillum magneticum) protein is Dual-specificity RNA methyltransferase RlmN.